The following is a 219-amino-acid chain: Ribose-5-phosphate isomerase A (219 aa).

Substrate is bound by residues Thr28–Thr31, Asp81–Asp84, and Lys94–Gly97. Glu103 acts as the Proton acceptor in catalysis. Lys121 provides a ligand contact to substrate.

It belongs to the ribose 5-phosphate isomerase family. In terms of assembly, homodimer.

The enzyme catalyses aldehydo-D-ribose 5-phosphate = D-ribulose 5-phosphate. The protein operates within carbohydrate degradation; pentose phosphate pathway; D-ribose 5-phosphate from D-ribulose 5-phosphate (non-oxidative stage): step 1/1. Its function is as follows. Catalyzes the reversible conversion of ribose-5-phosphate to ribulose 5-phosphate. In Pectobacterium carotovorum subsp. carotovorum (strain PC1), this protein is Ribose-5-phosphate isomerase A.